Here is a 2060-residue protein sequence, read N- to C-terminus: Unconventional myosin-X (2060 aa).

Met-1 is subject to N-acetylmethionine. In terms of domain architecture, Myosin motor spans 63–739; it reads EGVDDMASLT…LEQKLEKRRE (677 aa). ATP-binding positions include Asn-104, Tyr-113, 160 to 165, and Asn-215; that span reads GAGKTE. The tract at residues 619 to 641 is actin-binding; the sequence is LHSLMATLSSSNPFFVRCIKPNT. 3 consecutive IQ domains span residues 742–771, 765–794, and 788–817; these read IDRAAMVIRAHILGYLARKQYRKVLCGVVT, VLCGVVTIQKNYRAFLARKRFLHLKKAAIV, and LKKAAIVFQKQLRGRLARKVYRQLLAEKRE. Residues 814–882 are SAH; sequence EKRELEERKR…LTRELEKQRE (69 aa). The stretch at 883-933 forms a coiled coil; the sequence is NKQVEEILRLEKEIEDLQRMKEQQELSLTEASLQKLQQLRDEELRRLEDEA. Residues Ser-961, Ser-964, and Ser-967 each carry the phosphoserine modification. 2 disordered regions span residues 971–1039 and 1064–1088; these read SELA…PYMN and SLHNSSSGESTYCMPQNNGDLPSPD. The span at 991–1005 shows a compositional bias: acidic residues; the sequence is PEEEVDEGFEADDDA. Positions 1064–1083 are enriched in polar residues; that stretch reads SLHNSSSGESTYCMPQNNGD. Phosphothreonine is present on Thr-1160. 2 consecutive PH domains span residues 1214–1312 and 1394–1499; these read EALK…QVHS and EFIV…NVTD. Residues 1549 to 1697 enclose the MyTH4 domain; sequence LPYGDINLNL…PSRDEIEALI (149 aa). The FERM domain maps to 1702-2046; that stretch reads MTSTVYCHGG…AYISMIVKKR (345 aa).

It belongs to the TRAFAC class myosin-kinesin ATPase superfamily. Myosin family. Monomer, when in an inactive conformation in the cytosol. Homodimer in its active, membrane-bound conformation; antiparallel coiled coil-mediated dimer formation. Interacts with ECPAS. Interacts with DCC and ITGB5; the presence of DCC inhibits ITGB5 binding. Interacts with tubulin; ITGB5 or DCC binding inhibits tubulin binding. Interacts strongly with CALM3 and weakly with CALM, the CALM3 interaction is essential for function in filopodial extension and motility. Interacts with ITGB1, ITGB3 and ITGB5. Interacts with NEO1. Interacts with VASP.

The protein localises to the cytoplasm. It localises to the cytosol. The protein resides in the cell projection. It is found in the lamellipodium. Its subcellular location is the ruffle. The protein localises to the cytoskeleton. It localises to the filopodium tip. The protein resides in the cell cortex. It is found in the filopodium membrane. Its subcellular location is the cell membrane. In terms of biological role, myosins are actin-based motor molecules with ATPase activity. Unconventional myosins serve in intracellular movements. MYO10 binds to actin filaments and actin bundles and functions as a plus end-directed motor. Moves with higher velocity and takes larger steps on actin bundles than on single actin filaments. The tail domain binds to membranous compartments containing phosphatidylinositol 3,4,5-trisphosphate or integrins, and mediates cargo transport along actin filaments. Regulates cell shape, cell spreading and cell adhesion. Stimulates the formation and elongation of filopodia. In hippocampal neurons it induces the formation of dendritic filopodia by trafficking the actin-remodeling protein VASP to the tips of filopodia, where it promotes actin elongation. Plays a role in formation of the podosome belt in osteoclasts. This is Unconventional myosin-X (Myo10) from Rattus norvegicus (Rat).